A 355-amino-acid polypeptide reads, in one-letter code: Peptide chain release factor 1 (355 aa).

Q233 is modified (N5-methylglutamine). Over residues 280-293 (ERRKKEQERADSRR) the composition is skewed to basic and acidic residues. The disordered stretch occupies residues 280–306 (ERRKKEQERADSRRGQVGSGNRSERIR).

It belongs to the prokaryotic/mitochondrial release factor family. In terms of processing, methylated by PrmC. Methylation increases the termination efficiency of RF1.

It is found in the cytoplasm. Peptide chain release factor 1 directs the termination of translation in response to the peptide chain termination codons UAG and UAA. The polypeptide is Peptide chain release factor 1 (Rickettsia africae (strain ESF-5)).